We begin with the raw amino-acid sequence, 22 residues long: Polydim-I (22 aa).

As to expression, expressed by the venom gland.

It is found in the secreted. In terms of biological role, antibacterial peptide. Acts on the Mycobacterium abscessus subsp. massiliense cell wall. Reduces 40-50% of the bacterial load in macrophages infected with different M.abscessus strains. Is not cytotoxic towards mammalian cells, and shows no hemolytic activity against human erythrocytes. In vivo, reduces the bacterial load in the lungs, spleen, and liver of highly susceptible mice intravenously infected with M.abscessus. The sequence is that of Polydim-I from Polybia dimorpha (Neotropical wasp).